We begin with the raw amino-acid sequence, 175 residues long: MRVLGIDPGLTRCGVGVVEGVPGRPCTLIAYHVVRTDPDDELPLRLLHLDRSLTALVAEHRPDGVAVERVFSQHNVRTVMGTAQASGVAVLAGARAGIPVQTYTPSEVKAAVTGSGQADKAQMTAMVTRLLRLSEPPRPADAADALALAICHVWRGGTRSRLAAAADRARRGGGR.

Catalysis depends on residues aspartate 7, glutamate 68, and aspartate 141. Residues aspartate 7, glutamate 68, and aspartate 141 each coordinate Mg(2+).

Belongs to the RuvC family. In terms of assembly, homodimer which binds Holliday junction (HJ) DNA. The HJ becomes 2-fold symmetrical on binding to RuvC with unstacked arms; it has a different conformation from HJ DNA in complex with RuvA. In the full resolvosome a probable DNA-RuvA(4)-RuvB(12)-RuvC(2) complex forms which resolves the HJ. Requires Mg(2+) as cofactor.

The protein resides in the cytoplasm. It catalyses the reaction Endonucleolytic cleavage at a junction such as a reciprocal single-stranded crossover between two homologous DNA duplexes (Holliday junction).. Its function is as follows. The RuvA-RuvB-RuvC complex processes Holliday junction (HJ) DNA during genetic recombination and DNA repair. Endonuclease that resolves HJ intermediates. Cleaves cruciform DNA by making single-stranded nicks across the HJ at symmetrical positions within the homologous arms, yielding a 5'-phosphate and a 3'-hydroxyl group; requires a central core of homology in the junction. The consensus cleavage sequence is 5'-(A/T)TT(C/G)-3'. Cleavage occurs on the 3'-side of the TT dinucleotide at the point of strand exchange. HJ branch migration catalyzed by RuvA-RuvB allows RuvC to scan DNA until it finds its consensus sequence, where it cleaves and resolves the cruciform DNA. The polypeptide is Crossover junction endodeoxyribonuclease RuvC (Salinispora arenicola (strain CNS-205)).